The chain runs to 917 residues: Isoleucine--tRNA ligase (917 aa).

Pro56, His67, Glu554, Gly555, Asp557, Gln558, and His585 together coordinate L-isoleucyl-5'-AMP. The 'HIGH' region signature appears at Pro57–His67. Positions Lys595–Ser599 match the 'KMSKS' region motif. Lys598 contributes to the ATP binding site. Residues Arg632 and Gln640 each contribute to the tRNA(Ile) site. The Zn(2+) site is built by Cys886, Cys889, Cys906, and Cys909.

Belongs to the class-I aminoacyl-tRNA synthetase family. IleS type 1 subfamily. Monomer. It depends on Zn(2+) as a cofactor.

Its subcellular location is the cytoplasm. It carries out the reaction tRNA(Ile) + L-isoleucine + ATP = L-isoleucyl-tRNA(Ile) + AMP + diphosphate. In terms of biological role, catalyzes the attachment of isoleucine to tRNA(Ile). As IleRS can inadvertently accommodate and process structurally similar amino acids such as valine, to avoid such errors it has two additional distinct tRNA(Ile)-dependent editing activities. One activity is designated as 'pretransfer' editing and involves the hydrolysis of activated Val-AMP. The other activity is designated 'posttransfer' editing and involves deacylation of mischarged Val-tRNA(Ile). The chain is Isoleucine--tRNA ligase (ileS) from Staphylococcus aureus.